Here is a 371-residue protein sequence, read N- to C-terminus: Leu/Ile/Val-binding protein homolog 2 (371 aa).

An N-terminal signal peptide occupies residues Met-1–Ala-23.

It belongs to the leucine-binding protein family.

Component of an amino-acid transport system. The protein is Leu/Ile/Val-binding protein homolog 2 of Brucella abortus (strain 2308).